The primary structure comprises 330 residues: Phosphate acyltransferase (330 aa).

This sequence belongs to the PlsX family. In terms of assembly, homodimer. Probably interacts with PlsY.

The protein resides in the cytoplasm. It catalyses the reaction a fatty acyl-[ACP] + phosphate = an acyl phosphate + holo-[ACP]. The protein operates within lipid metabolism; phospholipid metabolism. Catalyzes the reversible formation of acyl-phosphate (acyl-PO(4)) from acyl-[acyl-carrier-protein] (acyl-ACP). This enzyme utilizes acyl-ACP as fatty acyl donor, but not acyl-CoA. This chain is Phosphate acyltransferase, found in Streptococcus agalactiae serotype Ia (strain ATCC 27591 / A909 / CDC SS700).